The primary structure comprises 319 residues: ATP-dependent 6-phosphofructokinase (319 aa).

Residue glycine 11 coordinates ATP. 21-25 (RAVVR) contributes to the ADP binding site. Residues 72–73 (RY) and 102–105 (GDGS) each bind ATP. Aspartate 103 contacts Mg(2+). 125-127 (TID) is a binding site for substrate. Aspartate 127 functions as the Proton acceptor in the catalytic mechanism. An ADP-binding site is contributed by arginine 154. Substrate contacts are provided by residues arginine 162 and 169–171 (MGR). ADP is bound by residues 185–187 (GAE), arginine 211, and 213–215 (KKH). Substrate contacts are provided by residues glutamate 222, arginine 243, and 249–252 (HVQR).

It belongs to the phosphofructokinase type A (PFKA) family. ATP-dependent PFK group I subfamily. Prokaryotic clade 'B1' sub-subfamily. In terms of assembly, homotetramer. Mg(2+) serves as cofactor.

The protein resides in the cytoplasm. The catalysed reaction is beta-D-fructose 6-phosphate + ATP = beta-D-fructose 1,6-bisphosphate + ADP + H(+). It functions in the pathway carbohydrate degradation; glycolysis; D-glyceraldehyde 3-phosphate and glycerone phosphate from D-glucose: step 3/4. Allosterically activated by ADP and other diphosphonucleosides, and allosterically inhibited by phosphoenolpyruvate. Its function is as follows. Catalyzes the phosphorylation of D-fructose 6-phosphate to fructose 1,6-bisphosphate by ATP, the first committing step of glycolysis. This Listeria innocua serovar 6a (strain ATCC BAA-680 / CLIP 11262) protein is ATP-dependent 6-phosphofructokinase.